The following is a 427-amino-acid chain: Gamma-glutamyl phosphate reductase (427 aa).

The protein belongs to the gamma-glutamyl phosphate reductase family.

Its subcellular location is the cytoplasm. It carries out the reaction L-glutamate 5-semialdehyde + phosphate + NADP(+) = L-glutamyl 5-phosphate + NADPH + H(+). Its pathway is amino-acid biosynthesis; L-proline biosynthesis; L-glutamate 5-semialdehyde from L-glutamate: step 2/2. Its function is as follows. Catalyzes the NADPH-dependent reduction of L-glutamate 5-phosphate into L-glutamate 5-semialdehyde and phosphate. The product spontaneously undergoes cyclization to form 1-pyrroline-5-carboxylate. The sequence is that of Gamma-glutamyl phosphate reductase from Brucella anthropi (strain ATCC 49188 / DSM 6882 / CCUG 24695 / JCM 21032 / LMG 3331 / NBRC 15819 / NCTC 12168 / Alc 37) (Ochrobactrum anthropi).